The chain runs to 446 residues: Tubulin alpha-2 chain (446 aa).

The short motif at 1 to 4 is the MREC motif element; it reads MREC. Positions 11, 68, 137, 141, 142, 176, 203, and 225 each coordinate GTP. Glu-68 lines the Mg(2+) pocket. Glu-251 is a catalytic residue.

It belongs to the tubulin family. Dimer of alpha and beta chains. A typical microtubule is a hollow water-filled tube with an outer diameter of 25 nm and an inner diameter of 15 nM. Alpha-beta heterodimers associate head-to-tail to form protofilaments running lengthwise along the microtubule wall with the beta-tubulin subunit facing the microtubule plus end conferring a structural polarity. Microtubules usually have 13 protofilaments but different protofilament numbers can be found in some organisms and specialized cells. Mg(2+) serves as cofactor. In terms of processing, some glutamate residues at the C-terminus are polyglycylated, resulting in polyglycine chains on the gamma-carboxyl group. Glycylation is mainly limited to tubulin incorporated into axonemes (cilia and flagella) whereas glutamylation is prevalent in neuronal cells, centrioles, axonemes, and the mitotic spindle. Both modifications can coexist on the same protein on adjacent residues, and lowering polyglycylation levels increases polyglutamylation, and reciprocally. The precise function of polyglycylation is still unclear. Some glutamate residues at the C-terminus are polyglutamylated, resulting in polyglutamate chains on the gamma-carboxyl group. Polyglutamylation plays a key role in microtubule severing by spastin (SPAST). SPAST preferentially recognizes and acts on microtubules decorated with short polyglutamate tails: severing activity by SPAST increases as the number of glutamates per tubulin rises from one to eight, but decreases beyond this glutamylation threshold. In terms of tissue distribution, testis specific.

The protein resides in the cytoplasm. Its subcellular location is the cytoskeleton. The enzyme catalyses GTP + H2O = GDP + phosphate + H(+). Tubulin is the major constituent of microtubules, a cylinder consisting of laterally associated linear protofilaments composed of alpha- and beta-tubulin heterodimers. Microtubules grow by the addition of GTP-tubulin dimers to the microtubule end, where a stabilizing cap forms. Below the cap, tubulin dimers are in GDP-bound state, owing to GTPase activity of alpha-tubulin. The polypeptide is Tubulin alpha-2 chain (Gallus gallus (Chicken)).